The primary structure comprises 360 residues: Photosystem II protein D1 (360 aa).

3 consecutive transmembrane segments (helical) span residues 29–46, 118–133, and 142–156; these read YIGW…TATC, HFLI…EWEL, and WICV…AATA. His118 contacts chlorophyll a. Tyr126 is a binding site for pheophytin a. Positions 170 and 189 each coordinate [CaMn4O5] cluster. A helical membrane pass occupies residues 197-218; the sequence is FHMAGVAGVFGGALFSAMHGSL. Residue His198 coordinates chlorophyll a. Residues His215 and 264–265 contribute to the a quinone site; that span reads SF. His215 contacts Fe cation. Residue His272 participates in Fe cation binding. The helical transmembrane segment at 274-288 threads the bilayer; the sequence is FLGAWPVVGIWLTAI. [CaMn4O5] cluster is bound by residues His332, Glu333, Asp342, and Ala344. The propeptide occupies 345 to 360; sequence SNSVVPVALTAPSVEA.

It belongs to the reaction center PufL/M/PsbA/D family. In terms of assembly, PSII is composed of 1 copy each of membrane proteins PsbA, PsbB, PsbC, PsbD, PsbE, PsbF, PsbH, PsbI, PsbJ, PsbK, PsbL, PsbM, PsbT, PsbX, PsbY, PsbZ, Psb30/Ycf12, at least 3 peripheral proteins of the oxygen-evolving complex and a large number of cofactors. It forms dimeric complexes. Requires The D1/D2 heterodimer binds P680, chlorophylls that are the primary electron donor of PSII, and subsequent electron acceptors. It shares a non-heme iron and each subunit binds pheophytin, quinone, additional chlorophylls, carotenoids and lipids. D1 provides most of the ligands for the Mn4-Ca-O5 cluster of the oxygen-evolving complex (OEC). There is also a Cl(-1) ion associated with D1 and D2, which is required for oxygen evolution. The PSII complex binds additional chlorophylls, carotenoids and specific lipids. as cofactor. In terms of processing, tyr-161 forms a radical intermediate that is referred to as redox-active TyrZ, YZ or Y-Z. Post-translationally, C-terminally processed by CTPA; processing is essential to allow assembly of the oxygen-evolving complex and thus photosynthetic growth.

The protein localises to the plastid. It is found in the chloroplast thylakoid membrane. The catalysed reaction is 2 a plastoquinone + 4 hnu + 2 H2O = 2 a plastoquinol + O2. In terms of biological role, photosystem II (PSII) is a light-driven water:plastoquinone oxidoreductase that uses light energy to abstract electrons from H(2)O, generating O(2) and a proton gradient subsequently used for ATP formation. It consists of a core antenna complex that captures photons, and an electron transfer chain that converts photonic excitation into a charge separation. The D1/D2 (PsbA/PsbD) reaction center heterodimer binds P680, the primary electron donor of PSII as well as several subsequent electron acceptors. The polypeptide is Photosystem II protein D1 (Cyanidioschyzon merolae (strain NIES-3377 / 10D) (Unicellular red alga)).